The following is a 163-amino-acid chain: Small ribosomal subunit protein uS3m (163 aa).

A mitochondrion-targeting transit peptide spans 1-31; it reads MAASLIRQTKLLSVFSSAGCFRSIHSTAACL.

It belongs to the universal ribosomal protein uS3 family. As to quaternary structure, component of the mitochondrial ribosome small subunit (28S) which comprises a 12S rRNA and about 30 distinct proteins.

Its subcellular location is the mitochondrion. This chain is Small ribosomal subunit protein uS3m (mrps24), found in Danio rerio (Zebrafish).